The following is a 428-amino-acid chain: uncharacterized protein (428 aa).

The segment at M1–Q49 is disordered. The segment covering S24 to Q49 has biased composition (polar residues).

This is an uncharacterized protein from Caenorhabditis elegans.